The chain runs to 514 residues: Cobyric acid synthase (514 aa).

In terms of domain architecture, GATase cobBQ-type spans 249–448 (LIDIAVIKLP…VHGVFDNDEI (200 aa)). Catalysis depends on cysteine 330, which acts as the Nucleophile. Histidine 440 is a catalytic residue.

It belongs to the CobB/CobQ family. CobQ subfamily.

Its pathway is cofactor biosynthesis; adenosylcobalamin biosynthesis. Its function is as follows. Catalyzes amidations at positions B, D, E, and G on adenosylcobyrinic A,C-diamide. NH(2) groups are provided by glutamine, and one molecule of ATP is hydrogenolyzed for each amidation. The sequence is that of Cobyric acid synthase from Ruminiclostridium cellulolyticum (strain ATCC 35319 / DSM 5812 / JCM 6584 / H10) (Clostridium cellulolyticum).